Consider the following 317-residue polypeptide: Ornithine carbamoyltransferase (317 aa).

Carbamoyl phosphate contacts are provided by residues 57–60 (STRT), Q84, R108, and 135–138 (HPCQ). Residues N166, D230, and 234 to 235 (SM) each bind L-ornithine. Residues 270-271 (CL) and R298 each bind carbamoyl phosphate.

The protein belongs to the aspartate/ornithine carbamoyltransferase superfamily. OTCase family. As to quaternary structure, homododecamer.

It is found in the cytoplasm. The enzyme catalyses carbamoyl phosphate + L-ornithine = L-citrulline + phosphate + H(+). It participates in amino-acid biosynthesis; L-arginine biosynthesis; L-arginine from L-ornithine and carbamoyl phosphate: step 1/3. In terms of biological role, reversibly catalyzes the transfer of the carbamoyl group from carbamoyl phosphate (CP) to the N(epsilon) atom of ornithine (ORN) to produce L-citrulline. This Pyrococcus horikoshii (strain ATCC 700860 / DSM 12428 / JCM 9974 / NBRC 100139 / OT-3) protein is Ornithine carbamoyltransferase.